Here is a 338-residue protein sequence, read N- to C-terminus: Nicotinate-nucleotide--dimethylbenzimidazole phosphoribosyltransferase (338 aa).

The active-site Proton acceptor is Glu-306.

This sequence belongs to the CobT family.

The enzyme catalyses 5,6-dimethylbenzimidazole + nicotinate beta-D-ribonucleotide = alpha-ribazole 5'-phosphate + nicotinate + H(+). It functions in the pathway nucleoside biosynthesis; alpha-ribazole biosynthesis; alpha-ribazole from 5,6-dimethylbenzimidazole: step 1/2. Catalyzes the synthesis of alpha-ribazole-5'-phosphate from nicotinate mononucleotide (NAMN) and 5,6-dimethylbenzimidazole (DMB). In Cereibacter sphaeroides (strain ATCC 17023 / DSM 158 / JCM 6121 / CCUG 31486 / LMG 2827 / NBRC 12203 / NCIMB 8253 / ATH 2.4.1.) (Rhodobacter sphaeroides), this protein is Nicotinate-nucleotide--dimethylbenzimidazole phosphoribosyltransferase.